Reading from the N-terminus, the 972-residue chain is uncharacterized protein (972 aa).

An N-terminal signal peptide occupies residues 1-21; it reads MTNMILLSAVFLSLAILETHC. The Extracellular portion of the chain corresponds to 22 to 932; that stretch reads ANHISTGIST…KELGEKLYHV (911 aa). Residues 892-912 are disordered; the sequence is EPTVTTTTESPPPPTTTTRQI. A helical membrane pass occupies residues 933 to 953; that stretch reads LFFMGVLTVSVAGGVIILSFI. Residues 954 to 972 lie on the Cytoplasmic side of the membrane; the sequence is GCLIMRKMEDAPQKTKYSV.

The protein resides in the host membrane. This is an uncharacterized protein from Magallana gigas (Pacific oyster).